Reading from the N-terminus, the 398-residue chain is S-adenosylmethionine synthase (398 aa).

H26 is an ATP binding site. D28 provides a ligand contact to Mg(2+). Residue E54 coordinates K(+). L-methionine-binding residues include E67 and Q110. The tract at residues 110–120 (QSPDIAQGVNE) is flexible loop. Residues 177–179 (DAK), 243–244 (RF), D252, 258–259 (RK), A275, and K279 contribute to the ATP site. L-methionine is bound at residue D252. Position 283 (K283) interacts with L-methionine.

This sequence belongs to the AdoMet synthase family. Homotetramer; dimer of dimers. It depends on Mg(2+) as a cofactor. K(+) serves as cofactor.

It is found in the cytoplasm. It carries out the reaction L-methionine + ATP + H2O = S-adenosyl-L-methionine + phosphate + diphosphate. Its pathway is amino-acid biosynthesis; S-adenosyl-L-methionine biosynthesis; S-adenosyl-L-methionine from L-methionine: step 1/1. In terms of biological role, catalyzes the formation of S-adenosylmethionine (AdoMet) from methionine and ATP. The overall synthetic reaction is composed of two sequential steps, AdoMet formation and the subsequent tripolyphosphate hydrolysis which occurs prior to release of AdoMet from the enzyme. The polypeptide is S-adenosylmethionine synthase (Desulfotalea psychrophila (strain LSv54 / DSM 12343)).